The primary structure comprises 74 residues: Sec-independent protein translocase protein TatA (74 aa).

A helical membrane pass occupies residues 1–21 (MGSFSIWHWLIVLLIVVLVFG).

Belongs to the TatA/E family. In terms of assembly, the Tat system comprises two distinct complexes: a TatABC complex, containing multiple copies of TatA, TatB and TatC subunits, and a separate TatA complex, containing only TatA subunits. Substrates initially bind to the TatABC complex, which probably triggers association of the separate TatA complex to form the active translocon.

The protein resides in the cell inner membrane. Part of the twin-arginine translocation (Tat) system that transports large folded proteins containing a characteristic twin-arginine motif in their signal peptide across membranes. TatA could form the protein-conducting channel of the Tat system. The polypeptide is Sec-independent protein translocase protein TatA (Nitrosospira multiformis (strain ATCC 25196 / NCIMB 11849 / C 71)).